A 44-amino-acid chain; its full sequence is Photosystem I reaction center subunit IX (44 aa).

The helical transmembrane segment at 7-27 (YLSVAPVLSTLWFGSLAGLLI) threads the bilayer.

The protein belongs to the PsaJ family.

It localises to the plastid. The protein resides in the chloroplast thylakoid membrane. Its function is as follows. May help in the organization of the PsaE and PsaF subunits. The polypeptide is Photosystem I reaction center subunit IX (Fagopyrum esculentum subsp. ancestrale (Wild buckwheat)).